The primary structure comprises 498 residues: Hexokinase-3 (498 aa).

The helical transmembrane segment at 4–24 threads the bilayer; the sequence is VAVAFAAVAVVAACSVAAVMV. One can recognise a Hexokinase domain in the interval 35–494; it reads RTVVEILKEL…SSIGSALLVA (460 aa). Residues 90–227 form a hexokinase small subdomain region; sequence TGREKGTYYA…GLDMHVAALV (138 aa). Gly-104 and Thr-105 together coordinate ADP. D-glucose-binding residues include Thr-193, Lys-194, Asn-228, and Asp-229. Positions 228 to 483 are hexokinase large subdomain; sequence NDTVGALSLG…QYVVVKAMED (256 aa). Thr-252 is an ADP binding site. Residues Asn-255, Glu-283, and Glu-314 each coordinate D-glucose. Gly-448 serves as a coordination point for ADP.

Belongs to the hexokinase family. Expressed in roots, emerging lateral roots, vascular tissues of cotyledons, roots and leaves, root and shoot meristems, anther filaments and funiculi of mature seeds.

The protein resides in the mitochondrion outer membrane. The enzyme catalyses a D-hexose + ATP = a D-hexose 6-phosphate + ADP + H(+). It catalyses the reaction D-fructose + ATP = D-fructose 6-phosphate + ADP + H(+). It carries out the reaction D-glucose + ATP = D-glucose 6-phosphate + ADP + H(+). The protein operates within carbohydrate metabolism; hexose metabolism. It functions in the pathway carbohydrate degradation; glycolysis; D-glyceraldehyde 3-phosphate and glycerone phosphate from D-glucose: step 1/4. Functionally, fructose and glucose phosphorylating enzyme. May be involved in the phosphorylation of glucose during the export from mitochondrion to cytosol. Plays a role in plant growth and development, perhaps by mediating cross-talk between glucose and hormone response pathways. Involved in root hair cell development by mediating certain aspects of cross talk between glucose and ethylene response pathways. This chain is Hexokinase-3, found in Arabidopsis thaliana (Mouse-ear cress).